The following is a 95-amino-acid chain: Protein TusB (95 aa).

It belongs to the DsrH/TusB family. As to quaternary structure, heterohexamer, formed by a dimer of trimers. The hexameric TusBCD complex contains 2 copies each of TusB, TusC and TusD. The TusBCD complex interacts with TusE.

It is found in the cytoplasm. In terms of biological role, part of a sulfur-relay system required for 2-thiolation of 5-methylaminomethyl-2-thiouridine (mnm(5)s(2)U) at tRNA wobble positions. This chain is Protein TusB, found in Yersinia enterocolitica serotype O:8 / biotype 1B (strain NCTC 13174 / 8081).